A 651-amino-acid polypeptide reads, in one-letter code: Translation initiation factor eIF2B subunit delta (651 aa).

Positions 1 to 108 (MSESEAKSRS…NERNVKKSTL (108 aa)) are disordered. The residue at position 2 (Ser2) is an N-acetylserine. Residues 11-28 (ATPPSKAKQATPTTTAAA) are compositionally biased toward low complexity. Composition is skewed to basic and acidic residues over residues 30-49 (GEKK…EKAA) and 76-90 (KQLQ…EQKQ). Position 106 is a phosphoserine (Ser106). Thr121 is subject to Phosphothreonine. Positions 566–600 (AMENKPKGNKIGGKKGSEGESKDASNEEDSNSKNI) are disordered. Basic and acidic residues predominate over residues 580–590 (KGSEGESKDAS).

This sequence belongs to the eIF-2B alpha/beta/delta subunits family. Component of the translation initiation factor 2B (eIF2B) complex which is a heterodecamer of two sets of five different subunits: alpha, beta, gamma, delta and epsilon. Subunits alpha, beta and delta comprise a regulatory subcomplex and subunits epsilon and gamma comprise a catalytic subcomplex. Within the complex, the hexameric regulatory complex resides at the center, with the two heterodimeric catalytic subcomplexes bound on opposite sides.

Its subcellular location is the cytoplasm. It is found in the cytosol. Acts as a component of the translation initiation factor 2B (eIF2B) complex, which catalyzes the exchange of GDP for GTP on the eukaryotic initiation factor 2 (eIF2) complex gamma subunit. Its guanine nucleotide exchange factor activity is repressed when bound to eIF2 complex phosphorylated on the alpha subunit, thereby limiting the amount of methionyl-initiator methionine tRNA available to the ribosome and consequently global translation is repressed. It activates the synthesis of GCN4 in yeast under amino acid starvation conditions by suppressing the inhibitory effects of multiple AUG codons present in the leader of GCN4 mRNA. It may promote either repression or activation of GCN4 expression depending on amino acid availability. GCD2 is also required for cell viability. Its function can partially be replaced by GCN3 under normal growth conditions in GCD2-defective mutants, under AA starvation conditions GCN3 is an antagonist (GCN4 translational activator). This is Translation initiation factor eIF2B subunit delta (GCD2) from Saccharomyces cerevisiae (strain ATCC 204508 / S288c) (Baker's yeast).